A 104-amino-acid chain; its full sequence is UPF0213 protein PA3854 (104 aa).

The 76-residue stretch at 13–88 folds into the GIY-YIG domain; it reads KCWSVYLVRA…KALSKRAKER (76 aa).

It belongs to the UPF0213 family.

This Pseudomonas aeruginosa (strain ATCC 15692 / DSM 22644 / CIP 104116 / JCM 14847 / LMG 12228 / 1C / PRS 101 / PAO1) protein is UPF0213 protein PA3854.